Here is a 392-residue protein sequence, read N- to C-terminus: Phospho-N-acetylmuramoyl-pentapeptide-transferase (392 aa).

10 consecutive transmembrane segments (helical) span residues A29 to R49, T76 to L96, F100 to W120, Y137 to E157, I193 to S213, G225 to T245, S262 to F282, V289 to I309, I314 to V334, and Q369 to L389.

The protein belongs to the glycosyltransferase 4 family. MraY subfamily. The cofactor is Mg(2+).

The protein resides in the cell inner membrane. The catalysed reaction is UDP-N-acetyl-alpha-D-muramoyl-L-alanyl-gamma-D-glutamyl-meso-2,6-diaminopimeloyl-D-alanyl-D-alanine + di-trans,octa-cis-undecaprenyl phosphate = di-trans,octa-cis-undecaprenyl diphospho-N-acetyl-alpha-D-muramoyl-L-alanyl-D-glutamyl-meso-2,6-diaminopimeloyl-D-alanyl-D-alanine + UMP. Its pathway is cell wall biogenesis; peptidoglycan biosynthesis. Its function is as follows. Catalyzes the initial step of the lipid cycle reactions in the biosynthesis of the cell wall peptidoglycan: transfers peptidoglycan precursor phospho-MurNAc-pentapeptide from UDP-MurNAc-pentapeptide onto the lipid carrier undecaprenyl phosphate, yielding undecaprenyl-pyrophosphoryl-MurNAc-pentapeptide, known as lipid I. The protein is Phospho-N-acetylmuramoyl-pentapeptide-transferase of Polaromonas sp. (strain JS666 / ATCC BAA-500).